The chain runs to 184 residues: Probable S-adenosyl-L-methionine-binding protein PYRAB06630 (184 aa).

Residues 9–140 (YRPIGIIHSP…YVPEFDVREN (132 aa)) enclose the TsaA-like domain. Residues 26 to 28 (PIQ), 65 to 66 (HR), R89, and 120 to 123 (LDGT) each bind S-adenosyl-L-methionine.

Belongs to the tRNA methyltransferase O family.

The chain is Probable S-adenosyl-L-methionine-binding protein PYRAB06630 from Pyrococcus abyssi (strain GE5 / Orsay).